The primary structure comprises 608 residues: Probable cytosolic Fe-S cluster assembly factor SPAC806.02c (608 aa).

Position 13–20 (13–20 (GKGGVGKS)) interacts with ATP. Positions 201 and 204 each coordinate [4Fe-4S] cluster. WD repeat units lie at residues 288 to 327 (GHTG…LVHV), 331 to 371 (FHTR…WECT), 376 to 415 (GHEN…EFDC), 421 to 460 (EHTQ…WALT), 465 to 504 (GHTN…EDVA), 529 to 567 (IHKG…EALW), and 576 to 608 (AHGV…WSFK).

This sequence in the N-terminal section; belongs to the Mrp/NBP35 ATP-binding proteins family. NUBP2/CFD1 subfamily. The protein in the C-terminal section; belongs to the WD repeat CIA1 family. As to quaternary structure, heterotetramer of 2 nbp35 and 2 SPAC806.02c chains. It depends on [4Fe-4S] cluster as a cofactor.

It is found in the cytoplasm. The protein resides in the nucleus. In terms of biological role, fusion protein of two essential components of the cytosolic iron-sulfur (Fe/S) protein assembly (CIA) machinery. Required for maturation of extramitochondrial Fe-S proteins. May form a heterotetramer with nubp35, functioning as a Fe-S scaffold complex, mediating the de novo assembly of an Fe-S cluster and its transfer to target apoproteins. In Schizosaccharomyces pombe (strain 972 / ATCC 24843) (Fission yeast), this protein is Probable cytosolic Fe-S cluster assembly factor SPAC806.02c.